The primary structure comprises 89 residues: NADH-ubiquinone oxidoreductase chain 4L (89 aa).

The next 3 helical transmembrane spans lie at 1–21, 22–42, and 57–77; these read MNITLILFLIGILGFVLNRKN, IILMLISIEIMLLAITFLILV, and IYIIVVAGAESAIGLAILVAF.

Belongs to the complex I subunit 4L family.

The protein resides in the mitochondrion membrane. It catalyses the reaction a ubiquinone + NADH + 5 H(+)(in) = a ubiquinol + NAD(+) + 4 H(+)(out). Functionally, core subunit of the mitochondrial membrane respiratory chain NADH dehydrogenase (Complex I) that is believed to belong to the minimal assembly required for catalysis. Complex I functions in the transfer of electrons from NADH to the respiratory chain. The immediate electron acceptor for the enzyme is believed to be ubiquinone. This chain is NADH-ubiquinone oxidoreductase chain 4L (ndh-4L), found in Neurospora crassa (strain ATCC 24698 / 74-OR23-1A / CBS 708.71 / DSM 1257 / FGSC 987).